A 186-amino-acid chain; its full sequence is Photosystem I assembly protein Ycf4 (186 aa).

Helical transmembrane passes span 26–46 (WATIIFIGALGFLLAGLSSYF) and 66–86 (IVMTFYGSIGVFLSLFLWLTI).

The protein belongs to the Ycf4 family.

Its subcellular location is the plastid. The protein resides in the chloroplast thylakoid membrane. In terms of biological role, seems to be required for the assembly of the photosystem I complex. This chain is Photosystem I assembly protein Ycf4, found in Pyropia yezoensis (Susabi-nori).